The primary structure comprises 556 residues: WD repeat-containing protein srw1 (556 aa).

The segment at 1–80 is disordered; the sequence is MDEFDGFTRP…NEGDRFIPSR (80 aa). Low complexity predominate over residues 12-37; that stretch reads SSNSSANRNSNNSMNRVENNNSNSDS. Residues 43-55 are compositionally biased toward basic and acidic residues; that stretch reads SRGDAHTRMRQGF. Ser-62 bears the Phosphoserine mark. The span at 69-78 shows a compositional bias: basic and acidic residues; it reads RTNEGDRFIP. Thr-98 is subject to Phosphothreonine. Positions 126–146 are enriched in polar residues; it reads TFNNSPIATPNTTIGVSTPRT. Residues 126–173 are disordered; the sequence is TFNNSPIATPNTTIGVSTPRTDSGIDDIELTQRTPPSSSHTSSSILQN. A compositionally biased stretch (low complexity) spans 159–169; the sequence is TPPSSSHTSSS. At Thr-177 the chain carries Phosphothreonine. A phosphoserine mark is found at Ser-187 and Ser-214. WD repeat units follow at residues 246-285, 289-328, 331-368, 372-411, 414-456, 458-499, and 502-541; these read GLAGDFYLNLLDWGQCNMLAVALASRVYLWSGISSEVTVM, YPTDTVTSLRWVQRGTHLAVGTHNGSVEIWDAATCKKTRT, GHTERVGALSWNDHVLSSGGRDNHILHRDVRAPEHYFR, AHRQEVCGLEWNSNENLLASGGNDNALMVWDKFEEKPLYS, NHIA…MLHN, DTGS…RVGT, and GHTDRVLYLAMSPNGENIVTGAADETLRFWKLFDSKSKHS.

This sequence belongs to the WD repeat CDC20/Fizzy family. In terms of processing, phosphorylated by cdc2-cdc13-CDK complex. This targets srw1 for proteolysis which in turn promotes cdc13 turnover. Dephosphorylated during G1 arrest.

The protein resides in the nucleus. Its function is as follows. Has a role in cell differentiation and cell cycling by negatively regulating cig2 and cdc12-associated cdc2. Down-regulates the level of cdc13, particularly in a nitrogen deprived environment. Regulator of cell cycle G1 phase progression. Prevents onset of mitosis during the pre-Start G1 period. Required for degradation of cdc13 mitotic cyclin B during G1 arrest but not during mitotic exit. The polypeptide is WD repeat-containing protein srw1 (srw1) (Schizosaccharomyces pombe (strain 972 / ATCC 24843) (Fission yeast)).